A 479-amino-acid polypeptide reads, in one-letter code: Sodium-coupled neutral amino acid transporter 5 (479 aa).

Over 1–61 the chain is Cytoplasmic; it reads MAISCAVGME…LDFEGKTSFG (61 aa). The helical transmembrane segment at 62–84 threads the bilayer; the sequence is MSVFNLSNAIMGSGILGLAYAMA. At 85 to 97 the chain is on the extracellular side; that stretch reads HTGVIFFLALLLC. Residues 98–118 traverse the membrane as a helical segment; sequence IALLSSYSIHLLLTCASVVGI. The Cytoplasmic segment spans residues 119–135; the sequence is RAYEQLGQRAFGPAGKV. A helical transmembrane segment spans residues 136-156; sequence VVAIIICLHNVGAMSSYLFII. Over 157–176 the chain is Extracellular; sequence KSELPLVIGTFLHMDPEGDW. The helical transmembrane segment at 177-197 threads the bilayer; that stretch reads FLKGNLLIILVSLLIILPLAL. Residues 198-202 lie on the Cytoplasmic side of the membrane; it reads MKHLG. A helical membrane pass occupies residues 203–223; that stretch reads YLGYTSSLSLTCMLFFLISVI. The Extracellular segment spans residues 224-264; the sequence is YKKFQIGCDVSHNDTVVEAEQAPLQAFNSSCEAELFTVDSQ. Cys-231 and Cys-254 are oxidised to a cystine. An N-linked (GlcNAc...) asparagine glycan is attached at Asn-236. Residues 265 to 285 form a helical membrane-spanning segment; it reads MSYTVPIMAFAFVCHPEVLPI. The Cytoplasmic portion of the chain corresponds to 286–302; the sequence is YTELCRPTQRRMQAVAN. A helical transmembrane segment spans residues 303 to 323; sequence MSIGAMFIMYGLTATFGYLTF. At 324-341 the chain is on the extracellular side; it reads YSTVKAEMLEMYTQEDML. A helical membrane pass occupies residues 342–362; it reads ILCVRLAVLLAVTLTVPVVLF. Residues 363–383 are Cytoplasmic-facing; it reads PIRRALQQLLFPSKAFSWLRH. Residues 384–404 traverse the membrane as a helical segment; the sequence is VAIALILLILVNILVICVPTI. The Extracellular portion of the chain corresponds to 405-406; sequence RD. Residues 407–427 form a helical membrane-spanning segment; the sequence is IFGFIGSTSAPSLIFILPSVF. Residues 428–446 are Cytoplasmic-facing; the sequence is YLRIVPTEVEPLFSWPKIQ. The helical transmembrane segment at 447-467 threads the bilayer; that stretch reads ALCFGVLGVLFMAISLGFMFA. The Extracellular portion of the chain corresponds to 468-479; sequence NWATGQSRMSGH.

It belongs to the amino acid/polyamine transporter 2 family. Expressed in the ganglion cell layer and the nerve fiber layer (at protein level). Also expreseed in the cells of the inner nuclear layer and in the inner plexiform layer (at protein level). Expressed in Mueller and ganglion retinal cell.

Its subcellular location is the cell membrane. It catalyses the reaction L-glutamine(out) + Na(+)(out) + H(+)(in) = L-glutamine(in) + Na(+)(in) + H(+)(out). The catalysed reaction is L-serine(out) + Na(+)(out) + H(+)(in) = L-serine(in) + Na(+)(in) + H(+)(out). The enzyme catalyses L-alanine(out) + Na(+)(out) + H(+)(in) = L-alanine(in) + Na(+)(in) + H(+)(out). It carries out the reaction glycine(out) + Na(+)(out) + H(+)(in) = glycine(in) + Na(+)(in) + H(+)(out). It catalyses the reaction L-asparagine(out) + Na(+)(out) + H(+)(in) = L-asparagine(in) + Na(+)(in) + H(+)(out). The catalysed reaction is L-histidine(out) + Na(+)(out) + H(+)(in) = L-histidine(in) + Na(+)(in) + H(+)(out). The enzyme catalyses L-cysteine(out) + Na(+)(out) + H(+)(in) = L-cysteine(in) + Na(+)(in) + H(+)(out). With respect to regulation, not inhibited by lithium. Partial allosteric regulation on ions sodium binding. In terms of biological role, symporter that cotransports neutral amino acids and sodium ions, coupled to an H(+) antiporter activity. Releases L-glutamine and glycine from astroglial cells and may participate in the glutamate/GABA-L-glutamine cycle and the NMDA receptors activation. In addition, contributes significantly to L-glutamine uptake in retina, namely in ganglion and Mueller cells therefore, participates in the retinal glutamate-glutamine cycle. The transport activity is pH sensitive, Li(+) tolerant, bidirectional and associated with large uncoupled fluxes of protons. Moreover functions in both direction and is associated with large uncoupled fluxes of protons. The transport is electroneutral coupled to the cotransport of 1 Na(+) and the antiport of 1 H(+). May have a particular importance for modulation of net hepatic glutamine flux. The protein is Sodium-coupled neutral amino acid transporter 5 of Mus musculus (Mouse).